The chain runs to 141 residues: D-aminoacyl-tRNA deacylase (141 aa).

The Gly-cisPro motif, important for rejection of L-amino acids motif lies at 133-134 (GP).

Belongs to the DTD family. In terms of assembly, homodimer.

Its subcellular location is the cytoplasm. It carries out the reaction glycyl-tRNA(Ala) + H2O = tRNA(Ala) + glycine + H(+). The enzyme catalyses a D-aminoacyl-tRNA + H2O = a tRNA + a D-alpha-amino acid + H(+). Functionally, an aminoacyl-tRNA editing enzyme that deacylates mischarged D-aminoacyl-tRNAs. Also deacylates mischarged glycyl-tRNA(Ala), protecting cells against glycine mischarging by AlaRS. Acts via tRNA-based rather than protein-based catalysis; rejects L-amino acids rather than detecting D-amino acids in the active site. By recycling D-aminoacyl-tRNA to D-amino acids and free tRNA molecules, this enzyme counteracts the toxicity associated with the formation of D-aminoacyl-tRNA entities in vivo and helps enforce protein L-homochirality. The chain is D-aminoacyl-tRNA deacylase from Beutenbergia cavernae (strain ATCC BAA-8 / DSM 12333 / CCUG 43141 / JCM 11478 / NBRC 16432 / NCIMB 13614 / HKI 0122).